The sequence spans 386 residues: Acetate kinase (386 aa).

Asparagine 9 contributes to the Mg(2+) binding site. Residue lysine 16 participates in ATP binding. Arginine 74 is a binding site for substrate. Aspartate 131 serves as the catalytic Proton donor/acceptor. ATP is bound by residues 191–195, 265–267, and 313–317; these read HLGNG, DFR, and GVGEN. Mg(2+) is bound at residue glutamate 367.

This sequence belongs to the acetokinase family. As to quaternary structure, homodimer. Mg(2+) serves as cofactor. The cofactor is Mn(2+).

It is found in the cytoplasm. The enzyme catalyses acetate + ATP = acetyl phosphate + ADP. It functions in the pathway metabolic intermediate biosynthesis; acetyl-CoA biosynthesis; acetyl-CoA from acetate: step 1/2. Functionally, catalyzes the formation of acetyl phosphate from acetate and ATP. Can also catalyze the reverse reaction. The protein is Acetate kinase of Mycolicibacterium gilvum (strain PYR-GCK) (Mycobacterium gilvum (strain PYR-GCK)).